The following is a 313-amino-acid chain: Olfactory receptor 4M1 (313 aa).

Over 1-25 (MEPANDTTVTEFILTGLSQTREVQL) the chain is Extracellular. A glycan (N-linked (GlcNAc...) asparagine) is linked at N5. The chain crosses the membrane as a helical span at residues 26–46 (VLFVIFLSFYLFILPVNILII). The Cytoplasmic segment spans residues 47-57 (CTIRLDSHLSS). A helical transmembrane segment spans residues 58 to 78 (PMYFLLANLAFLDIWYSSITA). The Extracellular segment spans residues 79-97 (PKMLVDFFVERKIISFGGC). A disulfide bridge links C97 with C179. The helical transmembrane segment at 98-118 (IAQLFFLHFVGASEMFLLTVM) threads the bilayer. Residues 119 to 142 (AFDRYAAICRPLHYATIMNRRLCC) lie on the Cytoplasmic side of the membrane. The helical transmembrane segment at 143 to 163 (ILVALSWTGGFVHSIIQVALI) threads the bilayer. At 164–204 (VRLPFCGPNELDNYFCDITQVVRIACANTFLEEMVMIFSSG) the chain is on the extracellular side. The helical transmembrane segment at 205–225 (LISVVCFIALLMSYAFLLTML) threads the bilayer. The Cytoplasmic portion of the chain corresponds to 226–238 (KKHSSSGESTSRA). The chain crosses the membrane as a helical span at residues 239-259 (ISTCYSHITIVVLMFGPSIYI). The Extracellular segment spans residues 260–270 (YARPFDSFSLD). Residues 271-291 (KVVSVFHTVIFPLLNPIIYTL) traverse the membrane as a helical segment. At 292-313 (RNKEVKAAMRKLVNRYIFCKEK) the chain is on the cytoplasmic side.

Belongs to the G-protein coupled receptor 1 family. In terms of tissue distribution, highly expressed in liver but not in adipose tissue. Also expressed at high level in testis.

Its subcellular location is the cell membrane. Its function is as follows. Olfactory receptor that acts as a receptor of Asprosin hormone at the surface of hepatocytes to promote hepatocyte glucose release. Also binds Asprosin in the arcuate nucleus of the hypothalamus, thereby stimulating appetite by promoting orexigenic AgRP neuronal activity. In testis, Asprosin-binding promotes sperm progressive motility and enhances male fertility. The activity of this receptor is mediated by G proteins which activate adenylyl cyclase, resulting in an elevation of intracellular cAMP. The protein is Olfactory receptor 4M1 of Mus musculus (Mouse).